The chain runs to 260 residues: MTRAGMERWRDRLALVTGASGGIGAAVARALVQQGLKVVGCARTVGNIEELAAECKSAGYPGTLIPYRCDLSNEEDILSMFSAVRSQHSGVDICINNAGMARPDTLLSGSTSGWKDMFNVNVLALSICTREAYQSMKERNIDDGHIININSMCGHRVPPQSVIHFYSATKYAVTALTEGLRQELLEAQTHIRATCISPGLVETQFAFKLHDKDPGEAAATYEHIKCLRPEDVAEAVIYVLSTPPHVQVGDIQMRPTEQVT.

Residues 1–30 (MTRAGMERWRDRLALVTGASGGIGAAVARA) form the signal peptide. NADP(+) contacts are provided by residues 18–23 (GASGGI), 43–44 (RT), glutamate 49, 70–71 (DL), and asparagine 97. Serine 151 and tyrosine 166 together coordinate substrate. Residues tyrosine 166, lysine 170, 201-204 (VETQ), and lysine 208 each bind NADP(+). Catalysis depends on tyrosine 166, which acts as the Proton acceptor.

Belongs to the short-chain dehydrogenases/reductases (SDR) family. As to quaternary structure, homotetramer.

Its subcellular location is the secreted. The catalysed reaction is a 3beta-hydroxysteroid + NADP(+) = a 3-oxosteroid + NADPH + H(+). It carries out the reaction 17beta-estradiol + NAD(+) = estrone + NADH + H(+). It catalyses the reaction 17beta-estradiol + NADP(+) = estrone + NADPH + H(+). It functions in the pathway steroid biosynthesis; estrogen biosynthesis. Inhibited by flavonoids including apigenin, luteolin, genistein, kaempferol and quercetin and also by carbenoxolone, zearalenone, glycyrrhetinic, curcumin and flufenamic acid. Its function is as follows. Catalyzes the conversion of the 17-keto group of estrone, 4- and 5-androstenes and 5-alpha-androstanes into their 17-beta-hydroxyl metabolites and the conversion of the 3-keto group of 3-, 3,17- and 3,20- diketosteroids into their 3-hydroxyl metabolites. Exhibits reductive 3-beta-hydroxysteroid dehydrogenase activity toward 5-beta-androstanes, 5-beta-pregnanes, 4-pregnenes and bile acids. May also reduce endogenous and exogenous alpha-dicarbonyl compounds and xenobiotic alicyclic ketones. This is Dehydrogenase/reductase SDR family member 11 (Dhrs11) from Mus musculus (Mouse).